Consider the following 393-residue polypeptide: NAD(P)H-quinone oxidoreductase subunit H, chloroplastic (393 aa).

Belongs to the complex I 49 kDa subunit family. As to quaternary structure, NDH is composed of at least 16 different subunits, 5 of which are encoded in the nucleus.

It localises to the plastid. The protein localises to the chloroplast thylakoid membrane. The catalysed reaction is a plastoquinone + NADH + (n+1) H(+)(in) = a plastoquinol + NAD(+) + n H(+)(out). The enzyme catalyses a plastoquinone + NADPH + (n+1) H(+)(in) = a plastoquinol + NADP(+) + n H(+)(out). Its function is as follows. NDH shuttles electrons from NAD(P)H:plastoquinone, via FMN and iron-sulfur (Fe-S) centers, to quinones in the photosynthetic chain and possibly in a chloroplast respiratory chain. The immediate electron acceptor for the enzyme in this species is believed to be plastoquinone. Couples the redox reaction to proton translocation, and thus conserves the redox energy in a proton gradient. This chain is NAD(P)H-quinone oxidoreductase subunit H, chloroplastic, found in Phaseolus vulgaris (Kidney bean).